The following is a 282-amino-acid chain: 2-dehydro-3-deoxyphosphooctonate aldolase (282 aa).

It belongs to the KdsA family.

Its subcellular location is the cytoplasm. The catalysed reaction is D-arabinose 5-phosphate + phosphoenolpyruvate + H2O = 3-deoxy-alpha-D-manno-2-octulosonate-8-phosphate + phosphate. The protein operates within carbohydrate biosynthesis; 3-deoxy-D-manno-octulosonate biosynthesis; 3-deoxy-D-manno-octulosonate from D-ribulose 5-phosphate: step 2/3. Its pathway is bacterial outer membrane biogenesis; lipopolysaccharide biosynthesis. The sequence is that of 2-dehydro-3-deoxyphosphooctonate aldolase from Agrobacterium fabrum (strain C58 / ATCC 33970) (Agrobacterium tumefaciens (strain C58)).